A 296-amino-acid chain; its full sequence is Ribosomal RNA small subunit methyltransferase A (296 aa).

S-adenosyl-L-methionine contacts are provided by asparagine 32, leucine 34, glycine 59, glutamate 80, aspartate 105, and asparagine 130.

The protein belongs to the class I-like SAM-binding methyltransferase superfamily. rRNA adenine N(6)-methyltransferase family. RsmA subfamily.

Its subcellular location is the cytoplasm. It catalyses the reaction adenosine(1518)/adenosine(1519) in 16S rRNA + 4 S-adenosyl-L-methionine = N(6)-dimethyladenosine(1518)/N(6)-dimethyladenosine(1519) in 16S rRNA + 4 S-adenosyl-L-homocysteine + 4 H(+). Its function is as follows. Specifically dimethylates two adjacent adenosines (A1518 and A1519) in the loop of a conserved hairpin near the 3'-end of 16S rRNA in the 30S particle. May play a critical role in biogenesis of 30S subunits. The chain is Ribosomal RNA small subunit methyltransferase A from Levilactobacillus brevis (strain ATCC 367 / BCRC 12310 / CIP 105137 / JCM 1170 / LMG 11437 / NCIMB 947 / NCTC 947) (Lactobacillus brevis).